The chain runs to 477 residues: MKVNLPAFERAGVMVVGDVMLDRYWYGPTCRISPEAPVPVVKVNTVEERPGGAANVAMNIASLGANARLVGLTGIDDAARALSKTLAEVNVKCDFVSVPTHPTITKLRVLSRNQQLIRLDFEEGFEGVDPQPLHERINQALGSIGALVLSDYAKGALTSVQTMISLARQAGVPVLIDPKGTDFERYRGATLLTPNLSEFEAVAGKCKSEDELVERGMKLIADYDLSALLVTRSEQGMTLLQPNKAPLHMPTQAQEVYDVTGAGDTVIGVLAATLAAGNTLEEACYFANAAAGVVVGKLGTSTVSPIELENAVRGRADTGFGVMTEEELRQAVASARKRGEKVVMTNGVFDILHAGHVSYLANARKLGDRLIVAVNSDASTKRLKGESRPVNPLEQRMIVLGALESVDWIVSFEEDTPQRLIAGILPDLLVKGGDYKPEEIAGSEEVWANGGEVMVLNFEDGCSTTNIIKKIQTESEK.

The ribokinase stretch occupies residues 1 to 318 (MKVNLPAFER…ENAVRGRADT (318 aa)). An ATP-binding site is contributed by 195-198 (NLSE). The active site involves Asp264. The tract at residues 344–477 (MTNGVFDILH…IKKIQTESEK (134 aa)) is cytidylyltransferase.

The protein in the N-terminal section; belongs to the carbohydrate kinase PfkB family. This sequence in the C-terminal section; belongs to the cytidylyltransferase family. In terms of assembly, homodimer.

It catalyses the reaction D-glycero-beta-D-manno-heptose 7-phosphate + ATP = D-glycero-beta-D-manno-heptose 1,7-bisphosphate + ADP + H(+). The catalysed reaction is D-glycero-beta-D-manno-heptose 1-phosphate + ATP + H(+) = ADP-D-glycero-beta-D-manno-heptose + diphosphate. It participates in nucleotide-sugar biosynthesis; ADP-L-glycero-beta-D-manno-heptose biosynthesis; ADP-L-glycero-beta-D-manno-heptose from D-glycero-beta-D-manno-heptose 7-phosphate: step 1/4. The protein operates within nucleotide-sugar biosynthesis; ADP-L-glycero-beta-D-manno-heptose biosynthesis; ADP-L-glycero-beta-D-manno-heptose from D-glycero-beta-D-manno-heptose 7-phosphate: step 3/4. Functionally, catalyzes the phosphorylation of D-glycero-D-manno-heptose 7-phosphate at the C-1 position to selectively form D-glycero-beta-D-manno-heptose-1,7-bisphosphate. Catalyzes the ADP transfer from ATP to D-glycero-beta-D-manno-heptose 1-phosphate, yielding ADP-D-glycero-beta-D-manno-heptose. The chain is Bifunctional protein HldE from Salmonella paratyphi A (strain ATCC 9150 / SARB42).